The sequence spans 283 residues: Polyamine aminopropyltransferase (283 aa).

The PABS domain occupies 5–238; it reads QTWIDEYHKG…GIWSWTFASS (234 aa). Gln-32 contributes to the S-methyl-5'-thioadenosine binding site. Spermidine is bound by residues His-63 and Asp-87. Residues Glu-107 and 139 to 140 contribute to the S-methyl-5'-thioadenosine site; that span reads DG. The active-site Proton acceptor is the Asp-158. 158-161 provides a ligand contact to spermidine; that stretch reads DCSD.

The protein belongs to the spermidine/spermine synthase family. Homodimer or homotetramer.

It localises to the cytoplasm. The enzyme catalyses S-adenosyl 3-(methylsulfanyl)propylamine + putrescine = S-methyl-5'-thioadenosine + spermidine + H(+). It functions in the pathway amine and polyamine biosynthesis; spermidine biosynthesis; spermidine from putrescine: step 1/1. Functionally, catalyzes the irreversible transfer of a propylamine group from the amino donor S-adenosylmethioninamine (decarboxy-AdoMet) to putrescine (1,4-diaminobutane) to yield spermidine. The chain is Polyamine aminopropyltransferase from Prochlorococcus marinus (strain MIT 9301).